The chain runs to 498 residues: ATP synthase subunit beta, chloroplastic (498 aa).

172–179 (GGAGVGKT) serves as a coordination point for ATP.

This sequence belongs to the ATPase alpha/beta chains family. F-type ATPases have 2 components, CF(1) - the catalytic core - and CF(0) - the membrane proton channel. CF(1) has five subunits: alpha(3), beta(3), gamma(1), delta(1), epsilon(1). CF(0) has four main subunits: a(1), b(1), b'(1) and c(9-12).

The protein resides in the plastid. It localises to the chloroplast thylakoid membrane. It carries out the reaction ATP + H2O + 4 H(+)(in) = ADP + phosphate + 5 H(+)(out). Functionally, produces ATP from ADP in the presence of a proton gradient across the membrane. The catalytic sites are hosted primarily by the beta subunits. This Agrostis stolonifera (Creeping bentgrass) protein is ATP synthase subunit beta, chloroplastic.